The sequence spans 632 residues: Armadillo repeat-containing X-linked protein 2 (632 aa).

At 1 to 6 (MSRVRD) the chain is on the mitochondrial intermembrane side. A mitochondrion outer membrane (MOM)-targeting sequence region spans residues 1–6 (MSRVRD). Residues 7–25 (AGCVAAGIVIGAGAWYCVY) form a helical; Signal-anchor membrane-spanning segment. Residues 26 to 40 (KYTRGRDQTKKRMAK) are mitochondrion outer membrane (MOM)-targeting sequence. Topologically, residues 26–632 (KYTRGRDQTK…VKVIKLVNKF (607 aa)) are cytoplasmic. 3 disordered regions span residues 68-124 (GFSP…AGVG), 160-304 (APKV…KVEV), and 335-369 (VPDS…RPVA). 2 stretches are compositionally biased toward low complexity: residues 86–120 (EASA…EADG) and 211–241 (VASP…SPGT). The span at 336-356 (PDSEEGESGWTDTESDSDSEP) shows a compositional bias: acidic residues. 3 ARM repeats span residues 376–416 (PYEI…NNAN), 418–457 (SCNQ…NLSE), and 498–537 (ITND…NFAE).

Belongs to the eutherian X-chromosome-specific Armcx family. Expressed at high levels ovary, heart, testis, prostate, brain, spleen and colon. Expressed at very low levels in liver and thymus. Not expressed in peripheral blood leukocytes. Not expressed in pancreas and ovarian carcinomas.

The protein resides in the mitochondrion. Its subcellular location is the mitochondrion outer membrane. May regulate the dynamics and distribution of mitochondria in neural cells. The chain is Armadillo repeat-containing X-linked protein 2 (ARMCX2) from Homo sapiens (Human).